The primary structure comprises 745 residues: Probable GMP synthase [glutamine-hydrolyzing] (745 aa).

Residues 1–37 (MKRSSSMLDINEDSQHSTNKAPPPKKAPEDRFDSANM) are disordered. The Glutamine amidotransferase type-1 domain occupies 60–252 (RIAILDFGAQ…LFKVVGCCGN (193 aa)). Residue Cys138 is the For GATase activity of the active site. Active-site residues include His226 and Glu228. The region spanning 253–461 (FTIQNREQSC…LGLPESIVQR (209 aa)) is the GMPS ATP-PPase domain. ATP is bound at residue 280-286 (SGGVDSA). Substrate contacts are provided by Arg363, Asp563, Gln662, Lys737, and Glu743.

Homodimer.

It catalyses the reaction XMP + L-glutamine + ATP + H2O = GMP + L-glutamate + AMP + diphosphate + 2 H(+). Its pathway is purine metabolism; GMP biosynthesis; GMP from XMP (L-Gln route): step 1/1. In Caenorhabditis elegans, this protein is Probable GMP synthase [glutamine-hydrolyzing] (gmps-1).